Here is a 370-residue protein sequence, read N- to C-terminus: 4-hydroxy-3-methylbut-2-en-1-yl diphosphate synthase (flavodoxin) (370 aa).

Positions 271, 274, 306, and 313 each coordinate [4Fe-4S] cluster.

This sequence belongs to the IspG family. [4Fe-4S] cluster serves as cofactor.

The enzyme catalyses (2E)-4-hydroxy-3-methylbut-2-enyl diphosphate + oxidized [flavodoxin] + H2O + 2 H(+) = 2-C-methyl-D-erythritol 2,4-cyclic diphosphate + reduced [flavodoxin]. It functions in the pathway isoprenoid biosynthesis; isopentenyl diphosphate biosynthesis via DXP pathway; isopentenyl diphosphate from 1-deoxy-D-xylulose 5-phosphate: step 5/6. Converts 2C-methyl-D-erythritol 2,4-cyclodiphosphate (ME-2,4cPP) into 1-hydroxy-2-methyl-2-(E)-butenyl 4-diphosphate. This is 4-hydroxy-3-methylbut-2-en-1-yl diphosphate synthase (flavodoxin) from Actinobacillus pleuropneumoniae serotype 5b (strain L20).